The following is a 484-amino-acid chain: NADH-quinone oxidoreductase subunit N (484 aa).

The next 13 helical transmembrane spans lie at 10–30 (LALPEIWLLAATCGVLVVDLF), 40–60 (FYLTQGALLVTAVLALSTQWG), 74–94 (SLGAVVKASVALLSVLALAYT), 108–128 (FYLLALFANLGMLVIASGGSL), 129–149 (LSLYLGLELLSLALYALVAYH), 163–183 (FVLGSLASGILLYGMSMVYGA), 203–223 (LMLLFGVVFMLVGVAFKLGAA), 237–257 (PTPVTLFLSTAPKVAAVALFM), 272–292 (EPMLMILAVASLLVGNLIAIV), 299–319 (MLAYSAIAHAGFIMVGFTAGT), 327–347 (LFYTIAYSIMAAGAFGMITVL), 370–390 (YAGVLLLVLVSMTGIPGTVGF), and 404–424 (GHIPLAIFAVVAAVVGAFYYL).

This sequence belongs to the complex I subunit 2 family. NDH-1 is composed of 14 different subunits. Subunits NuoA, H, J, K, L, M, N constitute the membrane sector of the complex.

The protein localises to the cell inner membrane. It carries out the reaction a quinone + NADH + 5 H(+)(in) = a quinol + NAD(+) + 4 H(+)(out). Its function is as follows. NDH-1 shuttles electrons from NADH, via FMN and iron-sulfur (Fe-S) centers, to quinones in the respiratory chain. The immediate electron acceptor for the enzyme in this species is believed to be ubiquinone. Couples the redox reaction to proton translocation (for every two electrons transferred, four hydrogen ions are translocated across the cytoplasmic membrane), and thus conserves the redox energy in a proton gradient. The chain is NADH-quinone oxidoreductase subunit N from Halorhodospira halophila (strain DSM 244 / SL1) (Ectothiorhodospira halophila (strain DSM 244 / SL1)).